The primary structure comprises 603 residues: Shugoshin (603 aa).

The stretch at H11–L74 forms a coiled coil. Disordered stretches follow at residues E112 to T164 and N201 to R227. Composition is skewed to low complexity over residues S146–S157 and N201–L214. Over residues P218 to R227 the composition is skewed to basic residues. A coiled-coil region spans residues K304–E325. Residues P331 to R399 form a disordered region. Residues K362–K376 are compositionally biased toward basic residues. Positions N431–K451 form a coiled coil. A compositionally biased stretch (basic and acidic residues) spans K455–F467. Disordered stretches follow at residues K455–F519 and H583–A603. Residues R483–N512 are compositionally biased toward low complexity. Residues H583–T593 show a composition bias toward polar residues. The segment covering Y594–A603 has biased composition (basic residues).

It belongs to the shugoshin family.

Its subcellular location is the nucleus. It is found in the chromosome. The protein resides in the centromere. Its function is as follows. Plays a central role in chromosome cohesion during cell division by preventing premature dissociation of cohesin complex from centromeres after prophase, when most of cohesin complex dissociates from chromosomes arms. The sequence is that of Shugoshin (SGO1) from Candida glabrata (strain ATCC 2001 / BCRC 20586 / JCM 3761 / NBRC 0622 / NRRL Y-65 / CBS 138) (Yeast).